We begin with the raw amino-acid sequence, 374 residues long: Methylthioribose-1-phosphate isomerase (374 aa).

The active-site Proton donor is the D256.

It belongs to the eIF-2B alpha/beta/delta subunits family. MtnA subfamily.

It is found in the cytoplasm. It localises to the nucleus. It catalyses the reaction 5-(methylsulfanyl)-alpha-D-ribose 1-phosphate = 5-(methylsulfanyl)-D-ribulose 1-phosphate. Its pathway is amino-acid biosynthesis; L-methionine biosynthesis via salvage pathway; L-methionine from S-methyl-5-thio-alpha-D-ribose 1-phosphate: step 1/6. Its function is as follows. Catalyzes the interconversion of methylthioribose-1-phosphate (MTR-1-P) into methylthioribulose-1-phosphate (MTRu-1-P). This is Methylthioribose-1-phosphate isomerase from Leishmania braziliensis.